Consider the following 284-residue polypeptide: Bifunctional protein FolD 1 (284 aa).

NADP(+) contacts are provided by residues Gly-166–Ser-168 and Ile-232.

This sequence belongs to the tetrahydrofolate dehydrogenase/cyclohydrolase family. Homodimer.

It carries out the reaction (6R)-5,10-methylene-5,6,7,8-tetrahydrofolate + NADP(+) = (6R)-5,10-methenyltetrahydrofolate + NADPH. The catalysed reaction is (6R)-5,10-methenyltetrahydrofolate + H2O = (6R)-10-formyltetrahydrofolate + H(+). Its pathway is one-carbon metabolism; tetrahydrofolate interconversion. Catalyzes the oxidation of 5,10-methylenetetrahydrofolate to 5,10-methenyltetrahydrofolate and then the hydrolysis of 5,10-methenyltetrahydrofolate to 10-formyltetrahydrofolate. The chain is Bifunctional protein FolD 1 from Ectopseudomonas mendocina (strain ymp) (Pseudomonas mendocina).